A 358-amino-acid chain; its full sequence is Photosystem II protein D1 2 (358 aa).

3 helical membrane-spanning segments follow: residues 28–45, 117–132, and 141–155; these read YVGWFGVLMIPCLLAATT, HFLIGISAYMGRQWEL, and WICVAYSAPLSAAFA. Residue H117 coordinates chlorophyll a. Y125 is a pheophytin a binding site. [CaMn4O5] cluster is bound by residues D169 and E188. Residues 196 to 217 traverse the membrane as a helical segment; sequence FHMLGVAGVFGGSLFSAMHGSL. H197 serves as a coordination point for chlorophyll a. Residues H214 and 263-264 contribute to the a quinone site; that span reads SF. H214 contacts Fe cation. H271 provides a ligand contact to Fe cation. Residues 273-287 traverse the membrane as a helical segment; that stretch reads FLAAWPVVGIWFTSM. Residues H331, E332, D341, and A343 each coordinate [CaMn4O5] cluster. A propeptide spanning residues 344 to 358 is cleaved from the precursor; that stretch reads ATESTPVALQAPTIG.

This sequence belongs to the reaction center PufL/M/PsbA/D family. As to quaternary structure, PSII is composed of 1 copy each of membrane proteins PsbA, PsbB, PsbC, PsbD, PsbE, PsbF, PsbH, PsbI, PsbJ, PsbK, PsbL, PsbM, PsbT, PsbX, PsbY, PsbZ, Psb30/Ycf12, peripheral proteins PsbO, CyanoQ (PsbQ), PsbU, PsbV and a large number of cofactors. It forms dimeric complexes. The cofactor is The D1/D2 heterodimer binds P680, chlorophylls that are the primary electron donor of PSII, and subsequent electron acceptors. It shares a non-heme iron and each subunit binds pheophytin, quinone, additional chlorophylls, carotenoids and lipids. D1 provides most of the ligands for the Mn4-Ca-O5 cluster of the oxygen-evolving complex (OEC). There is also a Cl(-1) ion associated with D1 and D2, which is required for oxygen evolution. The PSII complex binds additional chlorophylls, carotenoids and specific lipids.. Tyr-160 forms a radical intermediate that is referred to as redox-active TyrZ, YZ or Y-Z. Post-translationally, C-terminally processed by CtpA; processing is essential to allow assembly of the oxygen-evolving complex and thus photosynthetic growth.

The protein resides in the cellular thylakoid membrane. The enzyme catalyses 2 a plastoquinone + 4 hnu + 2 H2O = 2 a plastoquinol + O2. Photosystem II (PSII) is a light-driven water:plastoquinone oxidoreductase that uses light energy to abstract electrons from H(2)O, generating O(2) and a proton gradient subsequently used for ATP formation. It consists of a core antenna complex that captures photons, and an electron transfer chain that converts photonic excitation into a charge separation. The D1/D2 (PsbA/PsbD) reaction center heterodimer binds P680, the primary electron donor of PSII as well as several subsequent electron acceptors. The protein is Photosystem II protein D1 2 of Synechococcus sp. (strain WH7803).